The chain runs to 636 residues: uncharacterized protein (636 aa).

Disordered regions lie at residues 1 to 22 (MYNV…NEIG) and 81 to 107 (SSQT…PQNN). The Cytoplasmic portion of the chain corresponds to 1–170 (MYNVRGDLNR…YFVGGEGLMQ (170 aa)). Residues 171 to 191 (LLFLLFLAAGTGMLFIGLPIL) traverse the membrane as a helical; Signal-anchor for type II membrane protein segment. The Lumenal portion of the chain corresponds to 192 to 636 (TYTGHNSLAS…RPKNSLMDGC (445 aa)). In terms of domain architecture, GH16 spans 218–587 (LRYGSLIDPD…YVRIYQDSSD (370 aa)). N-linked (GlcNAc...) asparagine glycosylation is found at Asn291, Asn378, Asn429, Asn464, Asn489, and Asn616.

Belongs to the SKN1/KRE6 family.

It localises to the endoplasmic reticulum membrane. In terms of biological role, required for synthesis of the major beta-glucans of the yeast cell wall. This is an uncharacterized protein from Schizosaccharomyces pombe (strain 972 / ATCC 24843) (Fission yeast).